A 163-amino-acid polypeptide reads, in one-letter code: ATP synthase subunit b (163 aa).

A helical membrane pass occupies residues 13 to 33 (SFILFVWFCMKYIWPPIIFAI).

This sequence belongs to the ATPase B chain family. In terms of assembly, F-type ATPases have 2 components, F(1) - the catalytic core - and F(0) - the membrane proton channel. F(1) has five subunits: alpha(3), beta(3), gamma(1), delta(1), epsilon(1). F(0) has three main subunits: a(1), b(2) and c(10-14). The alpha and beta chains form an alternating ring which encloses part of the gamma chain. F(1) is attached to F(0) by a central stalk formed by the gamma and epsilon chains, while a peripheral stalk is formed by the delta and b chains.

The protein resides in the cell membrane. Its function is as follows. F(1)F(0) ATP synthase produces ATP from ADP in the presence of a proton or sodium gradient. F-type ATPases consist of two structural domains, F(1) containing the extramembraneous catalytic core and F(0) containing the membrane proton channel, linked together by a central stalk and a peripheral stalk. During catalysis, ATP synthesis in the catalytic domain of F(1) is coupled via a rotary mechanism of the central stalk subunits to proton translocation. In terms of biological role, component of the F(0) channel, it forms part of the peripheral stalk, linking F(1) to F(0). In Buchnera aphidicola subsp. Schizaphis graminum (strain Sg), this protein is ATP synthase subunit b.